Consider the following 269-residue polypeptide: MNIVSNRQEQAFSNPLAMRAASRNGSWTRETSGAALGYVQANLAILPSALADDFLRFCVRNPKACPLVGISEKGSPRIPDLGVDLDIRTDVPRYRVWEDGELAAEPTDISDLWSDDLVVFAIGCSFSFEEALIANGIGLRHVAEGHNVAMYRTNIECVPAGPFSGPMVVSMRPLAPADAIRAVQITSRMPAVHGAPIHIGLPASIGIENLDQPDYGDPTRIMPDEMPVFWACGVTPQAVIQAARPKFAITHAPGCMLVTDKPNAALIAF.

It belongs to the D-glutamate cyclase family.

The polypeptide is Putative hydro-lyase RL2444 (Rhizobium johnstonii (strain DSM 114642 / LMG 32736 / 3841) (Rhizobium leguminosarum bv. viciae)).